Consider the following 189-residue polypeptide: Testis-expressed protein 22 (189 aa).

The disordered stretch occupies residues M1–Q120. A compositionally biased stretch (low complexity) spans Q14–Q24. Positions I70 to T87 are enriched in basic and acidic residues. Low complexity predominate over residues Q103 to V114.

Mainly expressed in spermatocytes and spermatids in testis.

The protein resides in the cytoplasm. It localises to the cytoplasmic vesicle. It is found in the secretory vesicle. The protein localises to the acrosome. This is Testis-expressed protein 22 (Tex22) from Mus musculus (Mouse).